We begin with the raw amino-acid sequence, 249 residues long: MKVLVPVKRVVDYNVKVRVKGDGSGVELANVKMSMNPFDEIAVEEALRLKEGGKATEVVVVSIGPAQASETIRTGLAMGADRGILVKAEGTVEPLAVAKILKKVAEEEQPGLIILGKQAIDDDSNQTGQMLAALLGWSQATFASKLEVEGSDFKVTREVDGGLQTVKLKGPAIVTTDLRLNEPRYASLPNIMKAKKKPIAEKTVADYGVDVTARLEVLKTTEPAGRKAGVKVKDVAELVSKLKNEAGVL.

The protein belongs to the ETF beta-subunit/FixA family. As to quaternary structure, heterodimer of an alpha and a beta subunit. Requires FAD as cofactor. It depends on AMP as a cofactor.

In terms of biological role, the electron transfer flavoprotein serves as a specific electron acceptor for other dehydrogenases. It transfers the electrons to the main respiratory chain via ETF-ubiquinone oxidoreductase (ETF dehydrogenase). The protein is Electron transfer flavoprotein subunit beta (etfB) of Bradyrhizobium diazoefficiens (strain JCM 10833 / BCRC 13528 / IAM 13628 / NBRC 14792 / USDA 110).